The chain runs to 264 residues: Propanediol uptake facilitator PduF (264 aa).

Transmembrane regions (helical) follow at residues 10-30 (GAEFLGTGLFLFFGIGCLSAL) and 42-62 (ICIIWGLGISLAVYLTAGISG). Positions 66-68 (NPA) match the NPA 1 motif. 3 helical membrane passes run 84 to 104 (VLPYIIAQFAGAFGGALLAYV), 143 to 163 (VWQAALVEVVITSILMGMIMA), and 179 to 199 (LLIGILVAVIGASTGPLTGFA). Residues 201 to 203 (NPA) carry the NPA 2 motif. Residues 228-248 (IPYFIVPIVAPVIGACAGAAI) form a helical membrane-spanning segment.

Belongs to the MIP/aquaporin (TC 1.A.8) family.

Its subcellular location is the cell inner membrane. Functionally, probably facilitates diffusion of 1,2-propanediol (1,2-PD) into the cell. Modeling suggests active transport of 1,2-PD is required at low extracellular concentrations to allow maximal growth and saturation of PduP/PduQ within the bacterial microcompartment (BMC); this protein may be the cellular transporter. The 1,2-PD-specific bacterial microcompartment (BMC) concentrates low levels of 1,2-PD catabolic enzymes, concentrates volatile reaction intermediates thus enhancing pathway flux and keeps the level of toxic, mutagenic propionaldehyde low. This chain is Propanediol uptake facilitator PduF, found in Salmonella typhimurium (strain LT2 / SGSC1412 / ATCC 700720).